Here is a 499-residue protein sequence, read N- to C-terminus: MTQTLHALLKAVGLPVPAGVANATVTALTCDSRCVGQGSLFIGLPGERVDGGSFWPAALASGAAAVLIGEQAAAAHPPAPGDSVLVVPDPVAFWAGELASAFWQRPSMRMELIGVTGTNGKTTTTHLIEHLSQACGRPAALFGTLVNRWPGHSLTATHTTAAADRLQAQLAEALEGGTQVAAMEVSSHALDQQRVAGCRFSGAVFTNLTQDHLDYHPSMEAYFEAKALLFASPYLVGEGPRAVVNVDDPWGRQLADRLGERAWRCSLAHEADLTMADLRMTSNGVDGALRTPLGEGRFHSPLVGRFNLMNVLQAVGALLQQGLPLPLLLNALPSFRGVPGRMERIVLTGSAAEDHPAVLVDYAHTPDGLRNALEACRPFVRGQLICVFGCGGDRDRGKRPQMAAIAAALADQVVVTSDNPRTEDPGQILDDVVAGLPADAERQVEVDRAKAIALAIAQARCGDLVLIAGKGHEDYQILGTEKVHFDDREQAEQALRHWR.

A UDP-N-acetyl-alpha-D-muramoyl-L-alanyl-D-glutamate-binding site is contributed by S32. 117 to 123 (GTNGKTT) lines the ATP pocket. Residues 159–160 (TT), S186, Q192, and R194 each bind UDP-N-acetyl-alpha-D-muramoyl-L-alanyl-D-glutamate. Residue K226 is modified to N6-carboxylysine. Residues R394, 418 to 421 (DNPR), G469, and E473 contribute to the meso-2,6-diaminopimelate site. A Meso-diaminopimelate recognition motif motif is present at residues 418 to 421 (DNPR).

The protein belongs to the MurCDEF family. MurE subfamily. Mg(2+) is required as a cofactor. Post-translationally, carboxylation is probably crucial for Mg(2+) binding and, consequently, for the gamma-phosphate positioning of ATP.

The protein localises to the cytoplasm. The enzyme catalyses UDP-N-acetyl-alpha-D-muramoyl-L-alanyl-D-glutamate + meso-2,6-diaminopimelate + ATP = UDP-N-acetyl-alpha-D-muramoyl-L-alanyl-gamma-D-glutamyl-meso-2,6-diaminopimelate + ADP + phosphate + H(+). Its pathway is cell wall biogenesis; peptidoglycan biosynthesis. Functionally, catalyzes the addition of meso-diaminopimelic acid to the nucleotide precursor UDP-N-acetylmuramoyl-L-alanyl-D-glutamate (UMAG) in the biosynthesis of bacterial cell-wall peptidoglycan. The sequence is that of UDP-N-acetylmuramoyl-L-alanyl-D-glutamate--2,6-diaminopimelate ligase from Synechococcus sp. (strain WH7803).